Here is a 103-residue protein sequence, read N- to C-terminus: Large ribosomal subunit protein bL21 (103 aa).

This sequence belongs to the bacterial ribosomal protein bL21 family. In terms of assembly, part of the 50S ribosomal subunit. Contacts protein L20.

Functionally, this protein binds to 23S rRNA in the presence of protein L20. In Shewanella putrefaciens (strain CN-32 / ATCC BAA-453), this protein is Large ribosomal subunit protein bL21.